The following is a 124-amino-acid chain: Small ribosomal subunit protein uS12 (124 aa).

Residues 1–25 (MPTINQLIRKPRKSQKEKTASPALQ) form a disordered region. A 3-methylthioaspartic acid modification is found at aspartate 89.

The protein belongs to the universal ribosomal protein uS12 family. As to quaternary structure, part of the 30S ribosomal subunit. Contacts proteins S8 and S17. May interact with IF1 in the 30S initiation complex.

Functionally, with S4 and S5 plays an important role in translational accuracy. In terms of biological role, interacts with and stabilizes bases of the 16S rRNA that are involved in tRNA selection in the A site and with the mRNA backbone. Located at the interface of the 30S and 50S subunits, it traverses the body of the 30S subunit contacting proteins on the other side and probably holding the rRNA structure together. The combined cluster of proteins S8, S12 and S17 appears to hold together the shoulder and platform of the 30S subunit. The protein is Small ribosomal subunit protein uS12 of Borrelia turicatae (strain 91E135).